The chain runs to 114 residues: Cystatin Pr15a (114 aa).

The signal sequence occupies residues Met-1–Ala-22. Positions Gly-29 to Pro-83 constitute a Cystatin domain.

It belongs to the cystatin family. In terms of tissue distribution, expressed by the venom gland (anterior main gland) (at protein level).

The protein localises to the secreted. This is Cystatin Pr15a from Platymeris rhadamanthus (Red spot assassin bug).